The following is a 136-amino-acid chain: MKSKGTRFERDLLVELWKAGFAAIRVAGSGVSPFPCPDIVAGNGRTYLAIEVKMRKELPLYLSADEVEQLVTFARGFGAEAYVALKLPRKKWRFFPVQMLERTEKNFKIDESVYPLGLEIAEVAGKFFQERFGEKV.

Glu9 contacts Mg(2+). Ser29 is a catalytic residue. Mg(2+)-binding residues include Asp38 and Glu51.

This sequence belongs to the Holliday junction resolvase Hjc family. As to quaternary structure, homodimer. The cofactor is Mg(2+).

The enzyme catalyses Endonucleolytic cleavage at a junction such as a reciprocal single-stranded crossover between two homologous DNA duplexes (Holliday junction).. Its function is as follows. A structure-specific endonuclease that resolves Holliday junction (HJ) intermediates during genetic recombination. Cleaves 4-way DNA junctions introducing paired nicks in opposing strands, leaving a 5'-terminal phosphate and a 3'-terminal hydroxyl group that are subsequently ligated to produce recombinant products. This is Crossover junction endodeoxyribonuclease Hjc from Archaeoglobus fulgidus (strain ATCC 49558 / DSM 4304 / JCM 9628 / NBRC 100126 / VC-16).